Here is a 267-residue protein sequence, read N- to C-terminus: Ribosomal RNA small subunit methyltransferase A (267 aa).

S-adenosyl-L-methionine-binding residues include N18, L20, G45, E66, D91, and N112.

The protein belongs to the class I-like SAM-binding methyltransferase superfamily. rRNA adenine N(6)-methyltransferase family. RsmA subfamily.

The protein resides in the cytoplasm. The enzyme catalyses adenosine(1518)/adenosine(1519) in 16S rRNA + 4 S-adenosyl-L-methionine = N(6)-dimethyladenosine(1518)/N(6)-dimethyladenosine(1519) in 16S rRNA + 4 S-adenosyl-L-homocysteine + 4 H(+). Specifically dimethylates two adjacent adenosines (A1518 and A1519) in the loop of a conserved hairpin near the 3'-end of 16S rRNA in the 30S particle. May play a critical role in biogenesis of 30S subunits. The polypeptide is Ribosomal RNA small subunit methyltransferase A (Shewanella pealeana (strain ATCC 700345 / ANG-SQ1)).